A 40-amino-acid polypeptide reads, in one-letter code: Large ribosomal subunit protein bL36A (40 aa).

This sequence belongs to the bacterial ribosomal protein bL36 family.

The protein is Large ribosomal subunit protein bL36A of Renibacterium salmoninarum (strain ATCC 33209 / DSM 20767 / JCM 11484 / NBRC 15589 / NCIMB 2235).